The sequence spans 104 residues: Vesicle-associated membrane protein 3 (104 aa).

Residues 1-23 form a disordered region; it reads MTTNAPAGSSAAAGSSRRLQQTQ. The Cytoplasmic segment spans residues 1–81; the sequence is MTTNAPAGSS…KRKYWWKNCK (81 aa). A compositionally biased stretch (low complexity) spans 7 to 16; the sequence is AGSSAAAGSS. The v-SNARE coiled-coil homology domain occupies 18–78; the sequence is RLQQTQNQVD…AKLKRKYWWK (61 aa). Residues K70, K72, and K81 each participate in a glycyl lysine isopeptide (Lys-Gly) (interchain with G-Cter in ubiquitin) cross-link. A helical; Anchor for type IV membrane protein transmembrane segment spans residues 82-102; it reads MWAIGITVVVIIIIIIVVWSI. The Vesicular portion of the chain corresponds to 103–104; sequence SS.

This sequence belongs to the synaptobrevin family. Interacts with POPDC1 (via the C-terminus cytoplasmic tail). Interacts with BCAP31; involved in VAMP3 export from the endoplasmic reticulum. Interacts with BAIAP3; this interaction is increased in the presence of calcium. Interacts with PICALM. In terms of processing, ubiquitinated by RNF167 at Lys-70, Lys-72 and Lys-81, regulating the recycling endosome pathway.

It is found in the early endosome membrane. It localises to the recycling endosome membrane. Its subcellular location is the synapse. The protein localises to the synaptosome. Its function is as follows. SNARE involved in vesicular transport from the late endosomes to the trans-Golgi network. In Bos taurus (Bovine), this protein is Vesicle-associated membrane protein 3 (VAMP3).